Here is a 193-residue protein sequence, read N- to C-terminus: MASDELPVAAAATEEEDLVEILDEGSGRLDIARYVDHVRDLAAGAIATFEGTTRDSFEGRRVVELRYEAYGAMARRRLAAILREARAAHSLRRLAVAHRLGTVPAGEASVFVAASAVHRADAMEACRYVIDEVKASVPIWKKEVYDDGEVWKENREFLDRTTTDGTTASSPAPATRPAKGGGCCGSKVRANES.

Substrate contacts are provided by residues 118–119 (HR), K134, and 141–143 (KKE). The interval 159–193 (DRTTTDGTTASSPAPATRPAKGGGCCGSKVRANES) is disordered. A compositionally biased stretch (low complexity) spans 163–178 (TDGTTASSPAPATRPA).

This sequence belongs to the MoaE family. MOCS2B subfamily. In terms of assembly, heterotetramer; composed of 2 small (MOCS2A) and 2 large (MOCS2B) subunits.

The protein localises to the cytoplasm. The catalysed reaction is 2 [molybdopterin-synthase sulfur-carrier protein]-C-terminal-Gly-aminoethanethioate + cyclic pyranopterin phosphate + H2O = molybdopterin + 2 [molybdopterin-synthase sulfur-carrier protein]-C-terminal Gly-Gly + 2 H(+). The protein operates within cofactor biosynthesis; molybdopterin biosynthesis. In terms of biological role, catalytic subunit of the molybdopterin synthase complex, a complex that catalyzes the conversion of precursor Z into molybdopterin. Acts by mediating the incorporation of 2 sulfur atoms from thiocarboxylated MOCS2A into precursor Z to generate a dithiolene group. The chain is Molybdopterin synthase catalytic subunit from Oryza sativa subsp. indica (Rice).